The primary structure comprises 484 residues: Threonine synthase-like 2 (484 aa).

The residue at position 113 (Lys113) is an N6-(pyridoxal phosphate)lysine.

It belongs to the threonine synthase family. Pyridoxal 5'-phosphate is required as a cofactor.

The protein localises to the secreted. In terms of biological role, acts as a catabolic phospho-lyase on both gamma- and beta-phosphorylated substrates. Degrades O-phospho-threonine (PThr) to alpha-ketobutyrate, ammonia and phosphate. Its function is as follows. Potent inducer of osteoblastic production of IL6. May act to exacerbate inflammation and/or bone turnover under inflammatory conditions. In Homo sapiens (Human), this protein is Threonine synthase-like 2 (THNSL2).